A 224-amino-acid polypeptide reads, in one-letter code: Protein DEHYDRATION-INDUCED 19 homolog 4 (224 aa).

Polar residues predominate over residues 1–12; the sequence is MDSNWINCPSVF. The segment at 1–23 is disordered; it reads MDSNWINCPSVFSSSSSSSRRCQ. Residues 13 to 23 show a composition bias toward low complexity; sequence SSSSSSSRRCQ. T117 carries the post-translational modification Phosphothreonine.

This sequence belongs to the Di19 family. Post-translationally, phosphorylated in vitro by CPK3 or CPK11. As to expression, expressed in seedlings, roots, leaves, stems, flowers and siliques.

It is found in the cytoplasm. Its subcellular location is the perinuclear region. The polypeptide is Protein DEHYDRATION-INDUCED 19 homolog 4 (DI19-4) (Arabidopsis thaliana (Mouse-ear cress)).